A 264-amino-acid chain; its full sequence is S-adenosylmethionine decarboxylase proenzyme (264 aa).

Residue Ser112 is the Schiff-base intermediate with substrate; via pyruvic acid of the active site. The residue at position 112 (Ser112) is a Pyruvic acid (Ser); by autocatalysis. Catalysis depends on His117, which acts as the Proton acceptor; for processing activity. Cys140 acts as the Proton donor; for catalytic activity in catalysis.

It belongs to the prokaryotic AdoMetDC family. Type 2 subfamily. In terms of assembly, heterooctamer of four alpha and four beta chains arranged as a tetramer of alpha/beta heterodimers. Requires pyruvate as cofactor. In terms of processing, is synthesized initially as an inactive proenzyme. Formation of the active enzyme involves a self-maturation process in which the active site pyruvoyl group is generated from an internal serine residue via an autocatalytic post-translational modification. Two non-identical subunits are generated from the proenzyme in this reaction, and the pyruvate is formed at the N-terminus of the alpha chain, which is derived from the carboxyl end of the proenzyme. The post-translation cleavage follows an unusual pathway, termed non-hydrolytic serinolysis, in which the side chain hydroxyl group of the serine supplies its oxygen atom to form the C-terminus of the beta chain, while the remainder of the serine residue undergoes an oxidative deamination to produce ammonia and the pyruvoyl group blocking the N-terminus of the alpha chain.

It catalyses the reaction S-adenosyl-L-methionine + H(+) = S-adenosyl 3-(methylsulfanyl)propylamine + CO2. It participates in amine and polyamine biosynthesis; S-adenosylmethioninamine biosynthesis; S-adenosylmethioninamine from S-adenosyl-L-methionine: step 1/1. Functionally, catalyzes the decarboxylation of S-adenosylmethionine to S-adenosylmethioninamine (dcAdoMet), the propylamine donor required for the synthesis of the polyamines spermine and spermidine from the diamine putrescine. The sequence is that of S-adenosylmethionine decarboxylase proenzyme from Yersinia enterocolitica serotype O:8 / biotype 1B (strain NCTC 13174 / 8081).